A 368-amino-acid chain; its full sequence is Cyanide hydratase (368 aa).

The CN hydrolase domain maps to Tyr6–Leu285. Glu46 serves as the catalytic Proton acceptor. Residue Lys128 is part of the active site. Residue Cys163 is the Nucleophile of the active site. The tract at residues Leu341 to Ala368 is disordered.

Belongs to the carbon-nitrogen hydrolase superfamily. Nitrilase family. In terms of assembly, oligomer of dimers, forming left-handed helical fibers.

The enzyme catalyses formamide = hydrogen cyanide + H2O. In terms of biological role, catalyzes the hydration of cyanide to formamide. Degradation of cyanide may be important for plant pathogenic fungi in infection of cyanogenic plants. In Microdochium sorghi (Zonate leaf spot disease fungus), this protein is Cyanide hydratase.